The chain runs to 287 residues: mRNA-capping enzyme regulatory subunit OPG124 (287 aa).

Belongs to the orthopoxvirus mRNA-capping enzyme regulatory subunit family. Interacts with the late transcription elongation factor VLTF-4/OPG110. Interacts with the late transcription factors VLTF-1.

It is found in the virion. Functionally, acts with RNA polymerase to initiate transcription from late gene promoters. This chain is mRNA-capping enzyme regulatory subunit OPG124 (OPG124), found in Monkeypox virus.